Reading from the N-terminus, the 233-residue chain is Glutathione S-transferase U15 (233 aa).

The GST N-terminal domain occupies 5 to 85; the sequence is EEVKLLGTWY…YIDETWNSSG (81 aa). Glutathione is bound by residues 15–16, 42–43, 56–57, and 69–70; these read SP, SK, KV, and VS. A GST C-terminal domain is found at 92–219; the sequence is HPYDRALARF…VPDIDKVAKF (128 aa). A Phosphothreonine modification is found at T158.

The protein belongs to the GST superfamily. Tau family.

The protein resides in the cytoplasm. It localises to the cytosol. The enzyme catalyses RX + glutathione = an S-substituted glutathione + a halide anion + H(+). In terms of biological role, may be involved in the conjugation of reduced glutathione to a wide number of exogenous and endogenous hydrophobic electrophiles and have a detoxification role against certain herbicides. This is Glutathione S-transferase U15 (GSTU15) from Arabidopsis thaliana (Mouse-ear cress).